The chain runs to 452 residues: Isocitrate dehydrogenase [NADP], mitochondrial (452 aa).

Residues 1-39 (MAGYLRAVSSLCRASGSARTWAPAALTVPSWPEQPRRHY) constitute a mitochondrion transit peptide. N6-acetyllysine is present on residues Lys-45, Lys-48, Lys-67, and Lys-69. An N6-acetyllysine; alternate mark is found at Lys-80 and Lys-106. An N6-succinyllysine; alternate mark is found at Lys-80 and Lys-106. Residues 115–117 (TIT) and Arg-122 each bind NADP(+). Residue Thr-117 participates in D-threo-isocitrate binding. D-threo-isocitrate-binding positions include 134-140 (SPNGTIR) and Arg-149. Position 155 is an N6-acetyllysine (Lys-155). The residue at position 166 (Lys-166) is an N6-acetyllysine; alternate. Lys-166 is modified (N6-succinyllysine; alternate). D-threo-isocitrate is bound at residue Arg-172. An N6-acetyllysine; alternate mark is found at Lys-180 and Lys-193. Lys-180 and Lys-193 each carry N6-succinyllysine; alternate. Lys-199 is subject to N6-acetyllysine. The residue at position 256 (Lys-256) is an N6-acetyllysine; alternate. Lys-256 carries the post-translational modification N6-succinyllysine; alternate. An N6-acetyllysine mark is found at Lys-263, Lys-272, Lys-275, and Lys-280. Lys-282 is modified (N6-acetyllysine; alternate). At Lys-282 the chain carries N6-succinyllysine; alternate. Asp-291 provides a ligand contact to Mn(2+). An NADP(+)-binding site is contributed by Lys-299. Asp-314 serves as a coordination point for Mn(2+). NADP(+) is bound by residues 349-354 (GTVTRH) and Asn-367. The residue at position 384 (Lys-384) is an N6-acetyllysine; alternate. Lys-384 is modified (N6-succinyllysine; alternate). Residues Lys-400, Lys-413, and Lys-442 each carry the N6-acetyllysine modification.

It belongs to the isocitrate and isopropylmalate dehydrogenases family. In terms of assembly, homodimer. Mg(2+) serves as cofactor. Mn(2+) is required as a cofactor. Acetylation at Lys-413 dramatically reduces catalytic activity. Deacetylated by SIRT3. Predominantly expressed in heart, liver and kidney. Expressed in activated B lymphocytes.

Its subcellular location is the mitochondrion. The catalysed reaction is D-threo-isocitrate + NADP(+) = 2-oxoglutarate + CO2 + NADPH. Its function is as follows. Plays a role in intermediary metabolism and energy production. It may tightly associate or interact with the pyruvate dehydrogenase complex. The sequence is that of Isocitrate dehydrogenase [NADP], mitochondrial (Idh2) from Mus musculus (Mouse).